The chain runs to 342 residues: N-acetyl-gamma-glutamyl-phosphate reductase (342 aa).

C146 is an active-site residue.

The protein belongs to the NAGSA dehydrogenase family. Type 1 subfamily.

Its subcellular location is the cytoplasm. The catalysed reaction is N-acetyl-L-glutamate 5-semialdehyde + phosphate + NADP(+) = N-acetyl-L-glutamyl 5-phosphate + NADPH + H(+). Its pathway is amino-acid biosynthesis; L-arginine biosynthesis; N(2)-acetyl-L-ornithine from L-glutamate: step 3/4. In terms of biological role, catalyzes the NADPH-dependent reduction of N-acetyl-5-glutamyl phosphate to yield N-acetyl-L-glutamate 5-semialdehyde. In Streptomyces coelicolor (strain ATCC BAA-471 / A3(2) / M145), this protein is N-acetyl-gamma-glutamyl-phosphate reductase.